The sequence spans 145 residues: 3-hydroxyacyl-[acyl-carrier-protein] dehydratase FabZ (145 aa).

His-49 is a catalytic residue.

It belongs to the thioester dehydratase family. FabZ subfamily.

The protein localises to the cytoplasm. The catalysed reaction is a (3R)-hydroxyacyl-[ACP] = a (2E)-enoyl-[ACP] + H2O. In terms of biological role, involved in unsaturated fatty acids biosynthesis. Catalyzes the dehydration of short chain beta-hydroxyacyl-ACPs and long chain saturated and unsaturated beta-hydroxyacyl-ACPs. The protein is 3-hydroxyacyl-[acyl-carrier-protein] dehydratase FabZ of Ehrlichia ruminantium (strain Welgevonden).